A 312-amino-acid polypeptide reads, in one-letter code: Formate dehydrogenase iron-sulfur subunit (312 aa).

4Fe-4S ferredoxin-type domains are found at residues 35–65, 97–129, 130–159, and 164–195; these read IAKL…SDIN, LEWL…QYAN, GIVD…MNPE, and YKCT…FGSK. Residues cysteine 44, cysteine 47, cysteine 50, cysteine 54, cysteine 106, cysteine 109, cysteine 114, cysteine 118, cysteine 139, cysteine 142, cysteine 145, cysteine 149, cysteine 166, cysteine 169, cysteine 181, and cysteine 185 each coordinate [4Fe-4S] cluster.

In terms of assembly, formate dehydrogenase is a membrane-bound complex, formed by subunits alpha, beta and gamma. The cofactor is [4Fe-4S] cluster.

The protein localises to the cell membrane. In terms of biological role, allows to use formate as major electron donor during aerobic respiration. The beta chain is an electron transfer unit containing 4 cysteine clusters involved in the formation of iron-sulfur centers. Electrons are transferred from the gamma chain to the molybdenum cofactor of the alpha subunit. The sequence is that of Formate dehydrogenase iron-sulfur subunit (fdxH) from Haemophilus influenzae (strain ATCC 51907 / DSM 11121 / KW20 / Rd).